We begin with the raw amino-acid sequence, 343 residues long: Ferredoxin--NADP reductase (343 aa).

FAD contacts are provided by cysteine 18, aspartate 37, glutamine 45, tyrosine 50, valine 90, phenylalanine 125, aspartate 290, and threonine 331.

Belongs to the ferredoxin--NADP reductase type 2 family. As to quaternary structure, homodimer. FAD serves as cofactor.

The catalysed reaction is 2 reduced [2Fe-2S]-[ferredoxin] + NADP(+) + H(+) = 2 oxidized [2Fe-2S]-[ferredoxin] + NADPH. The sequence is that of Ferredoxin--NADP reductase from Parvibaculum lavamentivorans (strain DS-1 / DSM 13023 / NCIMB 13966).